A 482-amino-acid chain; its full sequence is Catalase easC (482 aa).

H58 is a catalytic residue. Residue Y347 coordinates heme.

Belongs to the catalase family. Heme is required as a cofactor.

Its pathway is alkaloid biosynthesis; ergot alkaloid biosynthesis. Functionally, catalase; part of the gene cluster that mediates the biosynthesis of fungal ergot alkaloid. DmaW catalyzes the first step of ergot alkaloid biosynthesis by condensing dimethylallyl diphosphate (DMAP) and tryptophan to form 4-dimethylallyl-L-tryptophan. The second step is catalyzed by the methyltransferase easF that methylates 4-dimethylallyl-L-tryptophan in the presence of S-adenosyl-L-methionine, resulting in the formation of 4-dimethylallyl-L-abrine. The catalase easC and the FAD-dependent oxidoreductase easE then transform 4-dimethylallyl-L-abrine to chanoclavine-I which is further oxidized by easD in the presence of NAD(+), resulting in the formation of chanoclavine-I aldehyde. Chanoclavine-I aldehyde is the precursor of ergoamides and ergopeptines in Clavicipitaceae, and clavine-type alcaloids such as fumiclavine in Trichocomaceae. However, the metabolites downstream of chanoclavine-I aldehyde in Arthrodermataceae have not been identified yet. The sequence is that of Catalase easC from Arthroderma otae (strain ATCC MYA-4605 / CBS 113480) (Microsporum canis).